Reading from the N-terminus, the 656-residue chain is Ankyrin repeat and SAM domain-containing protein 3 (656 aa).

Residues 1 to 422 form an interaction with NEK7 region; that stretch reads MSELSDEASE…AESSPQTQRA (422 aa). Serine 2 and serine 5 each carry phosphoserine. ANK repeat units lie at residues 34–64, 68–97, 101–130, 134–163, 168–197, and 201–220; these read DVPLDLHTAASIGQYEVVKECVQRRELDLNK, GGWTPLMYASYIGHDTIVHLLLEAGVSVNV, EGQTPLMLASSCGNESIAYFLLQQGAELEM, QGWTALFHCTSAGHQHMVRFLLDSGANANV, CGFTPLMEAAAAGHEIIVQYFLNHGVKVDA, and SGATARMLAKQYGHMKIVAL. Asparagine 96 carries the post-translational modification 3-hydroxyasparagine. Phosphoserine is present on residues serine 201, serine 225, serine 243, serine 244, and serine 245. Disordered stretches follow at residues 235 to 265 and 277 to 312; these read SPEKYEDLSSSDESCPAPQRQRPCRKKGVSI and GIGLGGRAPRPRYEQAPPRGYVTFNSSGENPLEEEG. Threonine 319 carries the phosphothreonine modification. Serine 320, serine 368, serine 371, and serine 375 each carry phosphoserine. A disordered region spans residues 346–425; it reads GPVQSSSSSE…SPQTQRAPYS (80 aa). The region spanning 425 to 488 is the SAM domain; it reads SGPQDLAALL…TSAIARWHSS (64 aa). The stretch at 501 to 526 forms a coiled coil; that stretch reads ADRLEAEMQELAIQLHKRCEEVEATR. Position 541 is a phosphoserine (serine 541).

As to quaternary structure, homooligomer. Interacts (via SAM domain) with ANKS6 (via SAM domain). Interacts with BICC1. Interacts with NPHP1. Interacts with NEK8. Interacts with HIF1AN. Interacts with NEK7; this interaction alters the subcellular distribution of NEK7 by preventing its nuclear translocation. Hydroxylated at Asn-96, most probably by HIF1AN. Post-translationally, phosphorylations at Ser-5, Ser-225, Thr-319, Ser-320, Ser-368 and Ser-371 occur in a NEK7-dependent manner. In terms of processing, polyubiquitinated.

It localises to the cell projection. The protein resides in the cilium. The protein localises to the cytoplasm. May be involved in vasopressin signaling in the kidney. In Homo sapiens (Human), this protein is Ankyrin repeat and SAM domain-containing protein 3 (ANKS3).